Reading from the N-terminus, the 97-residue chain is Small ribosomal subunit protein bS6 (97 aa).

It belongs to the bacterial ribosomal protein bS6 family.

Functionally, binds together with bS18 to 16S ribosomal RNA. In Syntrophomonas wolfei subsp. wolfei (strain DSM 2245B / Goettingen), this protein is Small ribosomal subunit protein bS6.